The sequence spans 336 residues: Ultraviolet-sensitive opsin (336 aa).

The Extracellular portion of the chain corresponds to 1–29; sequence MDAWTYQFGNLSKISPFEGPQYHLAPKWA. N10 carries N-linked (GlcNAc...) asparagine glycosylation. Residues 30–54 traverse the membrane as a helical segment; that stretch reads FYLQAAFMGFVFFVGTPLNAIVLFV. The Cytoplasmic portion of the chain corresponds to 55-66; it reads TMKYKKLRQPLN. Residues 67–91 traverse the membrane as a helical segment; it reads YILVNISLGGFIFDTFSVSQVFFSA. Residues 92-106 lie on the Extracellular side of the membrane; that stretch reads LRGYYFFGYTLCAME. C103 and C180 are oxidised to a cystine. A helical membrane pass occupies residues 107–126; it reads AAMGSIAGLVTGWSLAVLAF. At 127 to 145 the chain is on the cytoplasmic side; sequence ERYVVICKPFGSFKFGQSQ. Residues 146–169 form a helical membrane-spanning segment; it reads ALGAVALTWIIGIGCATPPFWGWS. The Extracellular portion of the chain corresponds to 170-195; sequence RYIPEGIGTACGPDWYTKNEEYNTES. Residues 196 to 223 form a helical membrane-spanning segment; the sequence is YTYFLLVSCFMMPIMIITFSYSQLLGAL. The Cytoplasmic portion of the chain corresponds to 224–245; sequence RAVAAQQAESASTQKAEKEVSR. A helical transmembrane segment spans residues 246–269; the sequence is MVVVMVGSFVVCYGPYAITALYFS. The Extracellular portion of the chain corresponds to 270-277; the sequence is YAEDSNKD. A helical membrane pass occupies residues 278–302; it reads YRLVAIPSLFSKSSCVYNPLIYAFM. K289 is subject to N6-(retinylidene)lysine. Over 303 to 336 the chain is Cytoplasmic; it reads NKQFNACIMETVFGKKIDESSEVSSKTETSSVSA.

This sequence belongs to the G-protein coupled receptor 1 family. Opsin subfamily. Post-translationally, phosphorylated on some or all of the serine and threonine residues present in the C-terminal region.

The protein resides in the membrane. In terms of biological role, visual pigments are the light-absorbing molecules that mediate vision. They consist of an apoprotein, opsin, covalently linked to cis-retinal. This Carassius auratus (Goldfish) protein is Ultraviolet-sensitive opsin.